A 175-amino-acid polypeptide reads, in one-letter code: Protein GrpE (175 aa).

Belongs to the GrpE family. As to quaternary structure, homodimer.

It is found in the cytoplasm. Functionally, participates actively in the response to hyperosmotic and heat shock by preventing the aggregation of stress-denatured proteins, in association with DnaK and GrpE. It is the nucleotide exchange factor for DnaK and may function as a thermosensor. Unfolded proteins bind initially to DnaJ; upon interaction with the DnaJ-bound protein, DnaK hydrolyzes its bound ATP, resulting in the formation of a stable complex. GrpE releases ADP from DnaK; ATP binding to DnaK triggers the release of the substrate protein, thus completing the reaction cycle. Several rounds of ATP-dependent interactions between DnaJ, DnaK and GrpE are required for fully efficient folding. The protein is Protein GrpE of Thermoplasma acidophilum (strain ATCC 25905 / DSM 1728 / JCM 9062 / NBRC 15155 / AMRC-C165).